We begin with the raw amino-acid sequence, 236 residues long: Baculoviral IAP repeat-containing protein 8 (236 aa).

Residues 7–70 (WLITFGTWMY…KWYPGCKYLL (64 aa)) form a BIR repeat. Zn(2+) contacts are provided by cysteine 39, cysteine 42, histidine 59, and cysteine 66. The RING-type zinc finger occupies 189 to 224 (CKICMDRHIAVVFIPCGHLVTCKQCAEAVDRCPMCN).

Belongs to the IAP family. As to quaternary structure, binds to caspase-9.

It is found in the cytoplasm. Its function is as follows. Protects against apoptosis mediated by BAX. The sequence is that of Baculoviral IAP repeat-containing protein 8 (BIRC8) from Gorilla gorilla gorilla (Western lowland gorilla).